A 485-amino-acid polypeptide reads, in one-letter code: Forkhead box protein N3 (485 aa).

Disordered regions lie at residues 1 to 54 (MGPV…KGGM) and 85 to 108 (PVQD…DAKQ). The segment covering 16–30 (ISVSSQCYRSSTLSN) has biased composition (polar residues). The segment at residues 113–209 (KPPYSFSCLI…QALKKTPYHP (97 aa)) is a DNA-binding region (fork-head). 2 disordered regions span residues 316-357 (MESE…ISSS) and 401-449 (PLVE…MKEA). A compositionally biased stretch (low complexity) spans 338–357 (SSAKSANKRSSSPSDSISSS). Over residues 410-422 (QHKKKQHLLKLRR) the composition is skewed to basic residues.

As to expression, at early cleavage stages, localized within the animal half of the embryo. At gastrulation, expression expands over the whole embryo excluding the future endodermal cells of the blastopore. During neurulation, expressed in the prospective eye field and in the neural crest cells. Strongly enriched in the eye vesicles at stage 26. From stage 29 onwards, expressed predominantly in the eye, the branchial arches and the vagal ganglion. At stage 38, expressed throughout the head with strongest expression in the head mesenchyme and the eye lens.

The protein resides in the nucleus. Functionally, acts as a transcriptional repressor. May be involved in DNA damage-inducible cell cycle arrests (checkpoints). The protein is Forkhead box protein N3 of Xenopus laevis (African clawed frog).